Consider the following 401-residue polypeptide: 4-hydroxy-3-methylbut-2-enyl diphosphate reductase (401 aa).

[4Fe-4S] cluster is bound at residue C66. Residue H96 participates in (2E)-4-hydroxy-3-methylbut-2-enyl diphosphate binding. Residue H96 participates in dimethylallyl diphosphate binding. Residue H96 participates in isopentenyl diphosphate binding. Residue C157 participates in [4Fe-4S] cluster binding. H185 is a (2E)-4-hydroxy-3-methylbut-2-enyl diphosphate binding site. Dimethylallyl diphosphate is bound at residue H185. An isopentenyl diphosphate-binding site is contributed by H185. The Proton donor role is filled by E187. A (2E)-4-hydroxy-3-methylbut-2-enyl diphosphate-binding site is contributed by T250. A [4Fe-4S] cluster-binding site is contributed by C288. (2E)-4-hydroxy-3-methylbut-2-enyl diphosphate contacts are provided by S317, S318, N319, and S379. Residues S317, S318, N319, and S379 each coordinate dimethylallyl diphosphate. S317, S318, N319, and S379 together coordinate isopentenyl diphosphate.

This sequence belongs to the IspH family. It depends on [4Fe-4S] cluster as a cofactor.

It catalyses the reaction isopentenyl diphosphate + 2 oxidized [2Fe-2S]-[ferredoxin] + H2O = (2E)-4-hydroxy-3-methylbut-2-enyl diphosphate + 2 reduced [2Fe-2S]-[ferredoxin] + 2 H(+). The enzyme catalyses dimethylallyl diphosphate + 2 oxidized [2Fe-2S]-[ferredoxin] + H2O = (2E)-4-hydroxy-3-methylbut-2-enyl diphosphate + 2 reduced [2Fe-2S]-[ferredoxin] + 2 H(+). The protein operates within isoprenoid biosynthesis; dimethylallyl diphosphate biosynthesis; dimethylallyl diphosphate from (2E)-4-hydroxy-3-methylbutenyl diphosphate: step 1/1. It functions in the pathway isoprenoid biosynthesis; isopentenyl diphosphate biosynthesis via DXP pathway; isopentenyl diphosphate from 1-deoxy-D-xylulose 5-phosphate: step 6/6. Its function is as follows. Catalyzes the conversion of 1-hydroxy-2-methyl-2-(E)-butenyl 4-diphosphate (HMBPP) into a mixture of isopentenyl diphosphate (IPP) and dimethylallyl diphosphate (DMAPP). Acts in the terminal step of the DOXP/MEP pathway for isoprenoid precursor biosynthesis. This is 4-hydroxy-3-methylbut-2-enyl diphosphate reductase from Trichodesmium erythraeum (strain IMS101).